The chain runs to 388 residues: Succinate--CoA ligase [ADP-forming] subunit beta (388 aa).

ATP is bound by residues K46, 53–55 (GRG), E99, C102, and E107. 2 residues coordinate Mg(2+): N199 and D213. Residues N264 and 321–323 (GIV) each bind substrate.

This sequence belongs to the succinate/malate CoA ligase beta subunit family. Heterotetramer of two alpha and two beta subunits. Mg(2+) serves as cofactor.

The catalysed reaction is succinate + ATP + CoA = succinyl-CoA + ADP + phosphate. It carries out the reaction GTP + succinate + CoA = succinyl-CoA + GDP + phosphate. It functions in the pathway carbohydrate metabolism; tricarboxylic acid cycle; succinate from succinyl-CoA (ligase route): step 1/1. Its function is as follows. Succinyl-CoA synthetase functions in the citric acid cycle (TCA), coupling the hydrolysis of succinyl-CoA to the synthesis of either ATP or GTP and thus represents the only step of substrate-level phosphorylation in the TCA. The beta subunit provides nucleotide specificity of the enzyme and binds the substrate succinate, while the binding sites for coenzyme A and phosphate are found in the alpha subunit. This is Succinate--CoA ligase [ADP-forming] subunit beta from Actinobacillus pleuropneumoniae serotype 5b (strain L20).